The sequence spans 63 residues: Large ribosomal subunit protein bL32 (63 aa).

Residues Met1 to Ser18 are compositionally biased toward basic residues. Residues Met1–Asn26 are disordered.

Belongs to the bacterial ribosomal protein bL32 family.

This chain is Large ribosomal subunit protein bL32, found in Neorickettsia sennetsu (strain ATCC VR-367 / Miyayama) (Ehrlichia sennetsu).